The following is a 453-amino-acid chain: ACT domain-containing protein ACR3 (453 aa).

4 ACT domains span residues 37–112 (LVKV…SASQ), 130–212 (SIEI…KFAR), 266–341 (VINV…RVSE), and 344–423 (SLEL…VPSR).

Expressed in roots, cotyledons, rosette and cauline leaves, sepals, style, and pedicels and tips of young developing siliques.

May bind amino acids. This is ACT domain-containing protein ACR3 from Arabidopsis thaliana (Mouse-ear cress).